We begin with the raw amino-acid sequence, 188 residues long: Elongation factor P (188 aa).

Lys-34 carries the post-translational modification N6-(3,6-diaminohexanoyl)-5-hydroxylysine.

The protein belongs to the elongation factor P family. In terms of processing, may be beta-lysylated on the epsilon-amino group of Lys-34 by the combined action of EpmA and EpmB, and then hydroxylated on the C5 position of the same residue by EpmC (if this protein is present). Lysylation is critical for the stimulatory effect of EF-P on peptide-bond formation. The lysylation moiety may extend toward the peptidyltransferase center and stabilize the terminal 3-CCA end of the tRNA. Hydroxylation of the C5 position on Lys-34 may allow additional potential stabilizing hydrogen-bond interactions with the P-tRNA.

It is found in the cytoplasm. It participates in protein biosynthesis; polypeptide chain elongation. Its function is as follows. Involved in peptide bond synthesis. Alleviates ribosome stalling that occurs when 3 or more consecutive Pro residues or the sequence PPG is present in a protein, possibly by augmenting the peptidyl transferase activity of the ribosome. Modification of Lys-34 is required for alleviation. The sequence is that of Elongation factor P from Klebsiella pneumoniae (strain 342).